The primary structure comprises 223 residues: Probable transaldolase (223 aa).

Catalysis depends on K86, which acts as the Schiff-base intermediate with substrate.

It belongs to the transaldolase family. Type 3B subfamily.

It localises to the cytoplasm. It catalyses the reaction D-sedoheptulose 7-phosphate + D-glyceraldehyde 3-phosphate = D-erythrose 4-phosphate + beta-D-fructose 6-phosphate. It functions in the pathway carbohydrate degradation; pentose phosphate pathway; D-glyceraldehyde 3-phosphate and beta-D-fructose 6-phosphate from D-ribose 5-phosphate and D-xylulose 5-phosphate (non-oxidative stage): step 2/3. Its function is as follows. Transaldolase is important for the balance of metabolites in the pentose-phosphate pathway. The chain is Probable transaldolase (tal) from Thermoplasma volcanium (strain ATCC 51530 / DSM 4299 / JCM 9571 / NBRC 15438 / GSS1).